The chain runs to 430 residues: Glutamate-1-semialdehyde 2,1-aminomutase (430 aa).

N6-(pyridoxal phosphate)lysine is present on lysine 265.

The protein belongs to the class-III pyridoxal-phosphate-dependent aminotransferase family. HemL subfamily. Homodimer. Requires pyridoxal 5'-phosphate as cofactor.

The protein resides in the cytoplasm. It carries out the reaction (S)-4-amino-5-oxopentanoate = 5-aminolevulinate. It participates in porphyrin-containing compound metabolism; protoporphyrin-IX biosynthesis; 5-aminolevulinate from L-glutamyl-tRNA(Glu): step 2/2. The chain is Glutamate-1-semialdehyde 2,1-aminomutase from Shewanella baltica (strain OS223).